The following is a 123-amino-acid chain: 1,4-dihydroxy-2-naphthoyl-CoA hydrolase (123 aa).

Catalysis depends on E46, which acts as the Nucleophile or proton acceptor.

Belongs to the thioesterase PaaI family.

It carries out the reaction 1,4-dihydroxy-2-naphthoyl-CoA + H2O = 1,4-dihydroxy-2-naphthoate + CoA + H(+). Its pathway is quinol/quinone metabolism; menaquinone biosynthesis. Catalyzes the hydrolysis of 1,4-dihydroxy-2-naphthoyl-CoA (DHNA-CoA) to 1,4-dihydroxy-2-naphthoate (DHNA) and free coenzyme A. Production of DHNA is required for protection against bacteriolysis in the cytosol of macrophages and tissue-specific virulence in vivo, suggesting that MenI is required to protect the bacteria from killing in the macrophage cytosol. This chain is 1,4-dihydroxy-2-naphthoyl-CoA hydrolase, found in Listeria monocytogenes serotype 1/2a (strain 10403S).